Reading from the N-terminus, the 185-residue chain is Large ribosomal subunit protein uL5 (185 aa).

It belongs to the universal ribosomal protein uL5 family. In terms of assembly, part of the 50S ribosomal subunit; part of the 5S rRNA/L5/L18/L25 subcomplex. Contacts the 5S rRNA and the P site tRNA. Forms a bridge to the 30S subunit in the 70S ribosome.

Functionally, this is one of the proteins that bind and probably mediate the attachment of the 5S RNA into the large ribosomal subunit, where it forms part of the central protuberance. In the 70S ribosome it contacts protein S13 of the 30S subunit (bridge B1b), connecting the 2 subunits; this bridge is implicated in subunit movement. Contacts the P site tRNA; the 5S rRNA and some of its associated proteins might help stabilize positioning of ribosome-bound tRNAs. The sequence is that of Large ribosomal subunit protein uL5 from Rhizobium leguminosarum bv. trifolii (strain WSM2304).